The following is a 423-amino-acid chain: WD repeat and SOCS box-containing protein 1 (423 aa).

Residues 76–100 (DRSSGAGPRRLSRQNSEGSLLPGEP) form a disordered region. WD repeat units lie at residues 125-166 (SRCV…LLLN), 169-209 (DHTD…NMVK), 213-252 (GHQN…LIRK), 255-294 (GHHN…VLLE), and 310-347 (ANDR…KSPQ). One can recognise an SOCS box domain in the interval 373–423 (DGSVHFWASPRSIASLQHLCRMTLRRVMPTQQVYTLPIPFSMQDYLAYKTL).

In terms of assembly, component of a probable ECS E3 ubiquitin-protein ligase complex that contains the Elongin BC complex.

It functions in the pathway protein modification; protein ubiquitination. Probable substrate-recognition component of a SCF-like ECS (Elongin-Cullin-SOCS-box protein) E3 ubiquitin-protein ligase complex which mediates the ubiquitination and subsequent proteasomal degradation of target proteins. The chain is WD repeat and SOCS box-containing protein 1 (wsb1) from Danio rerio (Zebrafish).